We begin with the raw amino-acid sequence, 289 residues long: Acetyl-coenzyme A carboxylase carboxyl transferase subunit beta (289 aa).

The region spanning 34–289 (MWVKCNKCGE…KLINMHKNSF (256 aa)) is the CoA carboxyltransferase N-terminal domain. Zn(2+) contacts are provided by C38, C41, C57, and C60. Residues 38–60 (CNKCGEILYQNDLEKNYMACNLC) form a C4-type zinc finger.

The protein belongs to the AccD/PCCB family. As to quaternary structure, acetyl-CoA carboxylase is a heterohexamer composed of biotin carboxyl carrier protein (AccB), biotin carboxylase (AccC) and two subunits each of ACCase subunit alpha (AccA) and ACCase subunit beta (AccD). Zn(2+) serves as cofactor.

Its subcellular location is the cytoplasm. It carries out the reaction N(6)-carboxybiotinyl-L-lysyl-[protein] + acetyl-CoA = N(6)-biotinyl-L-lysyl-[protein] + malonyl-CoA. The protein operates within lipid metabolism; malonyl-CoA biosynthesis; malonyl-CoA from acetyl-CoA: step 1/1. In terms of biological role, component of the acetyl coenzyme A carboxylase (ACC) complex. Biotin carboxylase (BC) catalyzes the carboxylation of biotin on its carrier protein (BCCP) and then the CO(2) group is transferred by the transcarboxylase to acetyl-CoA to form malonyl-CoA. This Clostridium botulinum (strain Loch Maree / Type A3) protein is Acetyl-coenzyme A carboxylase carboxyl transferase subunit beta.